Reading from the N-terminus, the 423-residue chain is Pre-mRNA-splicing regulator WTAP (423 aa).

Positions 234–423 (QQLSQMNQTQ…TSNASAGSVL (190 aa)) are disordered. 4 stretches are compositionally biased toward polar residues: residues 239-276 (MNQT…SSNV), 285-301 (NGPS…SGSS), 358-377 (DSPT…TDSN), and 392-404 (TAGT…NGLD). Residues 405–423 (SSAAAVATNTSNASAGSVL) are compositionally biased toward low complexity.

Belongs to the fl(2)d family. In terms of assembly, component of the WMM complex, a N6-methyltransferase complex composed of a catalytic subcomplex, named MAC, and of an associated subcomplex, named MACOM. Component of the MACOM subcomplex.

The protein localises to the nucleus speckle. It localises to the nucleus. The protein resides in the nucleoplasm. Associated component of the WMM complex, a complex that mediates N6-methyladenosine (m6A) methylation of RNAs, a modification that plays a role in the efficiency of mRNA splicing and RNA processing. The polypeptide is Pre-mRNA-splicing regulator WTAP (Danio rerio (Zebrafish)).